Consider the following 467-residue polypeptide: ATP synthase subunit beta (467 aa).

Position 150–157 (150–157) interacts with ATP; sequence GGAGVGKT.

It belongs to the ATPase alpha/beta chains family. In terms of assembly, F-type ATPases have 2 components, CF(1) - the catalytic core - and CF(0) - the membrane proton channel. CF(1) has five subunits: alpha(3), beta(3), gamma(1), delta(1), epsilon(1). CF(0) has three main subunits: a(1), b(2) and c(9-12). The alpha and beta chains form an alternating ring which encloses part of the gamma chain. CF(1) is attached to CF(0) by a central stalk formed by the gamma and epsilon chains, while a peripheral stalk is formed by the delta and b chains.

The protein resides in the cell inner membrane. The catalysed reaction is ATP + H2O + 4 H(+)(in) = ADP + phosphate + 5 H(+)(out). Its function is as follows. Produces ATP from ADP in the presence of a proton gradient across the membrane. The catalytic sites are hosted primarily by the beta subunits. The sequence is that of ATP synthase subunit beta from Vibrio alginolyticus.